Here is a 379-residue protein sequence, read N- to C-terminus: Dual-specificity RNA methyltransferase RlmN (379 aa).

The active-site Proton acceptor is glutamate 95. Positions 101-345 (EETRGTLCVS…TTVRKTRGDD (245 aa)) constitute a Radical SAM core domain. An intrachain disulfide couples cysteine 108 to cysteine 350. Residues cysteine 115, cysteine 119, and cysteine 122 each contribute to the [4Fe-4S] cluster site. S-adenosyl-L-methionine contacts are provided by residues 176 to 177 (GE), serine 208, 230 to 232 (SLH), and asparagine 307. Cysteine 350 acts as the S-methylcysteine intermediate in catalysis.

This sequence belongs to the radical SAM superfamily. RlmN family. It depends on [4Fe-4S] cluster as a cofactor.

Its subcellular location is the cytoplasm. It catalyses the reaction adenosine(2503) in 23S rRNA + 2 reduced [2Fe-2S]-[ferredoxin] + 2 S-adenosyl-L-methionine = 2-methyladenosine(2503) in 23S rRNA + 5'-deoxyadenosine + L-methionine + 2 oxidized [2Fe-2S]-[ferredoxin] + S-adenosyl-L-homocysteine. It carries out the reaction adenosine(37) in tRNA + 2 reduced [2Fe-2S]-[ferredoxin] + 2 S-adenosyl-L-methionine = 2-methyladenosine(37) in tRNA + 5'-deoxyadenosine + L-methionine + 2 oxidized [2Fe-2S]-[ferredoxin] + S-adenosyl-L-homocysteine. Specifically methylates position 2 of adenine 2503 in 23S rRNA and position 2 of adenine 37 in tRNAs. m2A2503 modification seems to play a crucial role in the proofreading step occurring at the peptidyl transferase center and thus would serve to optimize ribosomal fidelity. In Burkholderia ambifaria (strain MC40-6), this protein is Dual-specificity RNA methyltransferase RlmN.